Consider the following 627-residue polypeptide: tRNA uridine 5-carboxymethylaminomethyl modification enzyme MnmG (627 aa).

14–19 (GAGHAG) provides a ligand contact to FAD. 275–289 (GPRYCPSIEDKVVKF) contacts NAD(+).

It belongs to the MnmG family. Homodimer. Heterotetramer of two MnmE and two MnmG subunits. The cofactor is FAD.

The protein localises to the cytoplasm. In terms of biological role, NAD-binding protein involved in the addition of a carboxymethylaminomethyl (cmnm) group at the wobble position (U34) of certain tRNAs, forming tRNA-cmnm(5)s(2)U34. This is tRNA uridine 5-carboxymethylaminomethyl modification enzyme MnmG from Lachnoclostridium phytofermentans (strain ATCC 700394 / DSM 18823 / ISDg) (Clostridium phytofermentans).